The chain runs to 112 residues: Putative pterin-4-alpha-carbinolamine dehydratase (112 aa).

This sequence belongs to the pterin-4-alpha-carbinolamine dehydratase family.

It catalyses the reaction (4aS,6R)-4a-hydroxy-L-erythro-5,6,7,8-tetrahydrobiopterin = (6R)-L-erythro-6,7-dihydrobiopterin + H2O. This Shewanella baltica (strain OS155 / ATCC BAA-1091) protein is Putative pterin-4-alpha-carbinolamine dehydratase.